The chain runs to 63 residues: Large ribosomal subunit protein bL33m (63 aa).

The protein belongs to the bacterial ribosomal protein bL33 family.

The protein localises to the mitochondrion. The chain is Large ribosomal subunit protein bL33m (mrpl33) from Dictyostelium discoideum (Social amoeba).